The primary structure comprises 146 residues: Negative cofactor 2 complex subunit beta (146 aa).

Residues 124–146 form a disordered region; the sequence is FRQSRSRLHHNSVSDPVKSEDSS. 3 positions are modified to phosphoserine: Ser135, Ser137, and Ser142.

Component of the NC2 (negative cofactor 2) complex composed of BUR6 and NCB2. The NC2 complex associates with SPT15/TBP. Interacts with SPT15/TBP.

The protein resides in the nucleus. Functionally, component of the NC2 complex which represses RNA polymerase II transcription through binding to SPT15/TBP and thereby inhibiting the assembly of the preinitiation complex. The NC2 complex may also mediate transcriptional activation from TATA-driven promoters through association with SPT15/TBP. This Saccharomyces cerevisiae (strain ATCC 204508 / S288c) (Baker's yeast) protein is Negative cofactor 2 complex subunit beta (NCB2).